Reading from the N-terminus, the 222-residue chain is Ribonuclease 3 (222 aa).

The signal sequence occupies residues 1 to 19 (MKFFIFILALQQLYVQSFA). Glutamine 30 contributes to the RNA binding site. The cysteines at positions 36 and 42 are disulfide-linked. Residues histidine 57, phenylalanine 107, 110-111 (HE), and 114-115 (KH) each bind RNA. Catalysis depends on histidine 57, which acts as the Proton donor. 3 disulfides stabilise this stretch: cysteine 72–cysteine 118, cysteine 178–cysteine 213, and cysteine 194–cysteine 205. Residue glutamate 111 is part of the active site. Histidine 115 acts as the Proton acceptor in catalysis.

The protein belongs to the RNase T2 family.

It carries out the reaction a ribonucleotidyl-ribonucleotide-RNA + H2O = a 3'-end 3'-phospho-ribonucleotide-RNA + a 5'-end dephospho-ribonucleoside-RNA + H(+). Functionally, may remobilize phosphate, particularly when cells senesce or when phosphate becomes limiting. The chain is Ribonuclease 3 (RNS3) from Arabidopsis thaliana (Mouse-ear cress).